The primary structure comprises 118 residues: UPF0102 protein PC1_0307 (118 aa).

Belongs to the UPF0102 family.

The chain is UPF0102 protein PC1_0307 from Pectobacterium carotovorum subsp. carotovorum (strain PC1).